Consider the following 184-residue polypeptide: NEDD8-conjugating enzyme UBC12 (184 aa).

A disordered region spans residues 10 to 29 (EKQRQAAQAQAPAQGRSAAS). The segment covering 14–29 (QAAQAQAPAQGRSAAS) has biased composition (low complexity). One can recognise a UBC core domain in the interval 30–174 (PAQLRVEKDL…VQATMMGGHL (145 aa)). The Glycyl thioester intermediate role is filled by C112.

It belongs to the ubiquitin-conjugating enzyme family. UBC12 subfamily.

The catalysed reaction is [E1 NEDD8-activating enzyme]-S-[NEDD8 protein]-yl-L-cysteine + [E2 NEDD8-conjugating enzyme]-L-cysteine = [E1 NEDD8-activating enzyme]-L-cysteine + [E2 NEDD8-conjugating enzyme]-S-[NEDD8-protein]-yl-L-cysteine.. It functions in the pathway protein modification; protein neddylation. Accepts the ubiquitin-like protein NEDD8/RUB1 from the UBA3-ULA1 E1 complex and catalyzes its covalent attachment to other proteins. This is NEDD8-conjugating enzyme UBC12 (UBC12) from Eremothecium gossypii (strain ATCC 10895 / CBS 109.51 / FGSC 9923 / NRRL Y-1056) (Yeast).